We begin with the raw amino-acid sequence, 203 residues long: MRTIDKRIAPNVRLAATLVARAPALTLAYDARCKSRLAATLDTGEDVALVLPRGTVLRDGDVLVADDGALVRVAAAHEAVLLVRAPDALTLTRAAYHLGNRHTPVEVGAGCLKLEYDPVLADMLTRLGATVERASAPFQPEAGAYGGGHRHGHDATFAEDYALAQQVFDEHHGHSHSRSHDHDHDHDHQHGPSCSHGHHHGHR.

Over residues 170–190 (EHHGHSHSRSHDHDHDHDHQH) the composition is skewed to basic and acidic residues. The segment at 170–203 (EHHGHSHSRSHDHDHDHDHQHGPSCSHGHHHGHR) is disordered.

It belongs to the UreE family.

It localises to the cytoplasm. In terms of biological role, involved in urease metallocenter assembly. Binds nickel. Probably functions as a nickel donor during metallocenter assembly. In Burkholderia pseudomallei (strain 1710b), this protein is Urease accessory protein UreE.